Consider the following 198-residue polypeptide: MKFTVFASLFASAAAFAPAQQAARTSVATNMAFESELGAQAPLGFYDPLGLVADGDQEKFDRLRYVEIKHGRISMLAVAGYLAQEAGWRLGGDIALDGTKFADIPNGFAALSAIPQAGLIQIIAFIGFLETSVMKDITGGEFVGDFRNGYIDFGWDSFDQETKLRKRAIELNQGRAAQMGILALMVHEQLGVNILPGV.

A chloroplast-targeting transit peptide spans 1 to 31 (MKFTVFASLFASAAAFAPAQQAARTSVATNM). 3 helical membrane passes run 73–94 (ISML…GGDI), 114–134 (IPQA…TSVM), and 174–196 (GRAA…NILP).

The protein belongs to the fucoxanthin chlorophyll protein family. As to quaternary structure, the LHC complex of chromophytic algae is composed of fucoxanthin, chlorophyll A and C bound non-covalently by fucoxanthin chlorophyll proteins (FCPs). The ratio of the pigments in LHC; fucoxanthin: chlorophyll C: chlorophyll A; (0.6-1): (0.1-0.3): (1).

Its subcellular location is the plastid. It localises to the chloroplast thylakoid membrane. Functionally, the light-harvesting complex (LHC) functions as a light receptor, it captures and delivers excitation energy to photosystems with which it is closely associated. Energy is transferred from the carotenoid and chlorophyll C (or B) to chlorophyll A and the photosynthetic reaction centers where it is used to synthesize ATP and reducing power. The chain is Fucoxanthin-chlorophyll a-c binding protein B, chloroplastic (FCPB) from Phaeodactylum tricornutum (Diatom).